Consider the following 631-residue polypeptide: MAEQLVEAPAYARTLDRAVEYLLSCQKDEGYWWGPLLSNVTMEAEYVLLCHILDRVDRDRMEKIRRYLLHEQREDGTWALYPGGPPDLDTTIEAYVALKYIGMSRDEEPMQKALRFIQSQGGIESSRVFTRMWLALVGEYPWEKVPMVPPEIMFLGKRMPLNIYEFGSWARATVVALSIVMSRQPVFPLPERARVPELYETDVPPRRRGAKGGGGWIFDALDRALHGYQKLSVHPFRRAAEIRALDWLLERQAGDGSWGGIQPPWFYALIALKILDMTQHPAFIKGWEGLELYGVELDYGGWMFQASISPVWDTGLAVLALRAAGLPADHDRLVKAGEWLLDRQITVPGDWAVKRPNLKPGGFAFQFDNVYYPDVDDTAVVVWALNTLRLPDERRRRDAMTKGFRWIVGMQSSNGGWGAYDVDNTSDLPNHIPFCDFGEVTDPPSEDVTAHVLECFGSFGYDDAWKVIRRAVEYLKREQKPDGSWFGRWGVNYLYGTGAVVSALKAVGIDTREPYIQKALDWVEQHQNPDGGWGEDCRSYEDPAYAGKGASTPSQTAWALMALIAGGRAESEAARRGVQYLVETQRPDGGWDEPYYTGTGFPGDFYLGYTMYRHVFPTLALGRYKQAIERR.

PFTB repeat units follow at residues 15–56 (LDRA…LDRV), 61–102 (MEKI…KYIG), and 241–282 (EIRA…QHPA). Residue Asp376 is the Proton donor of the active site. PFTB repeat units follow at residues 400–441 (MTKG…GEVT), 468–508 (IRRA…KAVG), 516–557 (IQKA…SQTA), and 574–622 (ARRG…LALG).

This sequence belongs to the terpene cyclase/mutase family. In terms of assembly, homodimer.

The protein localises to the cell membrane. The enzyme catalyses squalene = hop-22(29)-ene. It carries out the reaction squalene + H2O = hopan-22-ol. The protein operates within secondary metabolite biosynthesis; hopanoid biosynthesis. Functionally, catalyzes the cyclization of squalene to two pentacyclic triterpenes, hop-22(29)-ene and hopan-22-ol (diplopterol); hopene and hopanol are formed at a constant ratio of 5:1. Is a key enzyme of hopanoid biosynthesis; hopanoids are components of the bacterial cytoplasmic membranes that play a vital role in stabilizing the membranes. This Alicyclobacillus acidocaldarius subsp. acidocaldarius (strain ATCC 27009 / DSM 446 / BCRC 14685 / JCM 5260 / KCTC 1825 / NBRC 15652 / NCIMB 11725 / NRRL B-14509 / 104-IA) (Bacillus acidocaldarius) protein is Squalene--hopene cyclase (shc).